Here is a 1108-residue protein sequence, read N- to C-terminus: Retinal guanylyl cyclase 2 (1108 aa).

A signal peptide spans 1 to 50; it reads MFLGPWPFSRLLSWFAISSRLSGQHGLPSSKFLRCLCLLALLPLLRWGQA. The Extracellular segment spans residues 51-469; it reads LPYKIGVIGP…CQGGIDPALA (419 aa). Cys-104 and Cys-132 are joined by a disulfide. The chain crosses the membrane as a helical span at residues 470-490; sequence MMVCFALLIALLSINGFAYFI. Over 491–1108 the chain is Cytoplasmic; it reads RRRINKIQLI…AERQLVRNKP (618 aa). In terms of domain architecture, Protein kinase spans 532–812; that stretch reads FQIISEVQSG…DEIFNQFKTF (281 aa). Residues 884-1014 form the Guanylate cyclase domain; the sequence is TLYFSDIVGF…DTVNTASRME (131 aa).

Belongs to the adenylyl cyclase class-4/guanylyl cyclase family. Homodimer. Interacts with RD3; promotes the exit of GUCY2F from the endoplasmic reticulum and its trafficking to the photoreceptor outer segments. In terms of processing, there are 9 conserved cysteine residues in sensory guanylate cyclases, 6 in the extracellular domain, which may be involved in intra- or interchain disulfide bonds. Retina.

It is found in the membrane. The protein localises to the photoreceptor outer segment membrane. The catalysed reaction is GTP = 3',5'-cyclic GMP + diphosphate. With respect to regulation, activated by GUCA1B when free calcium ions concentration is low, and inhibited by GUCA1B when free calcium ions concentration is high. Inhibited by RD3. Its function is as follows. Responsible for the synthesis of cyclic GMP (cGMP) in rods and cones of photoreceptors. Plays an essential role in phototransduction, by mediating cGMP replenishment. May also participate in the trafficking of membrane-asociated proteins to the photoreceptor outer segment membrane. This Mus musculus (Mouse) protein is Retinal guanylyl cyclase 2.